A 300-amino-acid polypeptide reads, in one-letter code: 4-hydroxy-tetrahydrodipicolinate synthase (300 aa).

Residue Thr-45 coordinates pyruvate. Tyr-140 functions as the Proton donor/acceptor in the catalytic mechanism. Lys-169 acts as the Schiff-base intermediate with substrate in catalysis. Ile-210 lines the pyruvate pocket.

This sequence belongs to the DapA family. In terms of assembly, homotetramer; dimer of dimers.

Its subcellular location is the cytoplasm. It carries out the reaction L-aspartate 4-semialdehyde + pyruvate = (2S,4S)-4-hydroxy-2,3,4,5-tetrahydrodipicolinate + H2O + H(+). Its pathway is amino-acid biosynthesis; L-lysine biosynthesis via DAP pathway; (S)-tetrahydrodipicolinate from L-aspartate: step 3/4. Catalyzes the condensation of (S)-aspartate-beta-semialdehyde [(S)-ASA] and pyruvate to 4-hydroxy-tetrahydrodipicolinate (HTPA). This Helicobacter pylori (strain HPAG1) protein is 4-hydroxy-tetrahydrodipicolinate synthase.